We begin with the raw amino-acid sequence, 337 residues long: DNA-directed RNA polymerase subunit alpha (337 aa).

Residues 1–233 (MIQKNWQELI…DQLSIFVNFE (233 aa)) are alpha N-terminal domain (alpha-NTD). The interval 249–337 (FNPALLKKVD…DLAKRYEDQY (89 aa)) is alpha C-terminal domain (alpha-CTD).

Belongs to the RNA polymerase alpha chain family. Homodimer. The RNAP catalytic core consists of 2 alpha, 1 beta, 1 beta' and 1 omega subunit. When a sigma factor is associated with the core the holoenzyme is formed, which can initiate transcription.

The catalysed reaction is RNA(n) + a ribonucleoside 5'-triphosphate = RNA(n+1) + diphosphate. Functionally, DNA-dependent RNA polymerase catalyzes the transcription of DNA into RNA using the four ribonucleoside triphosphates as substrates. In Brucella suis (strain ATCC 23445 / NCTC 10510), this protein is DNA-directed RNA polymerase subunit alpha.